A 307-amino-acid polypeptide reads, in one-letter code: Ribosomal RNA small subunit methyltransferase H (307 aa).

S-adenosyl-L-methionine-binding positions include 33–35, Asp-51, Phe-82, Asp-96, and Gln-103; that span reads GGY.

It belongs to the methyltransferase superfamily. RsmH family.

Its subcellular location is the cytoplasm. The catalysed reaction is cytidine(1402) in 16S rRNA + S-adenosyl-L-methionine = N(4)-methylcytidine(1402) in 16S rRNA + S-adenosyl-L-homocysteine + H(+). Its function is as follows. Specifically methylates the N4 position of cytidine in position 1402 (C1402) of 16S rRNA. The polypeptide is Ribosomal RNA small subunit methyltransferase H (Rickettsia massiliae (strain Mtu5)).